The sequence spans 471 residues: Glutamate--tRNA ligase (471 aa).

The 'HIGH' region motif lies at 9–19 (PSPTGYLHVGG). 4 residues coordinate Zn(2+): Cys-98, Cys-100, Cys-125, and His-127. The 'KMSKS' region signature appears at 237–241 (KLSKR). Lys-240 contributes to the ATP binding site.

This sequence belongs to the class-I aminoacyl-tRNA synthetase family. Glutamate--tRNA ligase type 1 subfamily. In terms of assembly, monomer. Zn(2+) is required as a cofactor.

Its subcellular location is the cytoplasm. It carries out the reaction tRNA(Glu) + L-glutamate + ATP = L-glutamyl-tRNA(Glu) + AMP + diphosphate. In terms of biological role, catalyzes the attachment of glutamate to tRNA(Glu) in a two-step reaction: glutamate is first activated by ATP to form Glu-AMP and then transferred to the acceptor end of tRNA(Glu). This chain is Glutamate--tRNA ligase, found in Escherichia coli O1:K1 / APEC.